Reading from the N-terminus, the 248-residue chain is Peroxisomal membrane protein 11A (248 aa).

Residues 1-97 (MATKAPEKIT…RSSRWDSNHE (97 aa)) are Cytoplasmic-facing. A helical membrane pass occupies residues 98 to 118 (LVLLIIAYGGEGLYYFVEQFI). Residues 119–220 (WLTKSGLIDA…MTIADIRDGK (102 aa)) lie on the Lumenal side of the membrane. The chain crosses the membrane as a helical span at residues 221-241 (GVLSAPNVISSAGLFSAIVST). The Cytoplasmic segment spans residues 242-248 (HKNWISC).

The protein belongs to the peroxin-11 family. Homooligomer. Interacts with ARC5 and FIS1B on peroxisomes. As to expression, expressed in developing siliques.

Its subcellular location is the peroxisome membrane. Its function is as follows. Involved in peroxisomal proliferation. Promotes peroxisomal duplication, aggregation or elongation without fission. The chain is Peroxisomal membrane protein 11A (PEX11A) from Arabidopsis thaliana (Mouse-ear cress).